Here is a 118-residue protein sequence, read N- to C-terminus: Acidic phospholipase A2 (118 aa).

Residues Tyr25, Gly27, and Gly29 each contribute to the Ca(2+) site. His45 is a catalytic residue. Ca(2+) is bound at residue Asp46. Asp86 is a catalytic residue.

The protein belongs to the phospholipase A2 family. Group II subfamily. D49 sub-subfamily. The cofactor is Ca(2+). In terms of processing, six disulfide bonds are present. In terms of tissue distribution, expressed by the venom gland.

It localises to the secreted. It carries out the reaction a 1,2-diacyl-sn-glycero-3-phosphocholine + H2O = a 1-acyl-sn-glycero-3-phosphocholine + a fatty acid + H(+). Its function is as follows. PLA2 catalyzes the calcium-dependent hydrolysis of the 2-acyl groups in 3-sn-phosphoglycerides. In Bitis gabonica (Gaboon adder), this protein is Acidic phospholipase A2.